Here is a 489-residue protein sequence, read N- to C-terminus: Betaine aldehyde dehydrogenase (489 aa).

Positions 26 and 93 each coordinate K(+). 150–152 (GAW) contacts NAD(+). Catalysis depends on Lys-162, which acts as the Charge relay system. 176–179 (KPSE) contributes to the NAD(+) binding site. Residue Val-180 participates in K(+) binding. 229 to 232 (GVET) provides a ligand contact to NAD(+). Leu-245 contacts K(+). Glu-251 (proton acceptor) is an active-site residue. NAD(+) is bound by residues Gly-253, Cys-285, and Glu-386. Residue Cys-285 is the Nucleophile of the active site. Residue Cys-285 is modified to Cysteine sulfenic acid (-SOH). 2 residues coordinate K(+): Lys-456 and Gly-459. Glu-463 functions as the Charge relay system in the catalytic mechanism.

The protein belongs to the aldehyde dehydrogenase family. In terms of assembly, dimer of dimers. K(+) is required as a cofactor.

It catalyses the reaction betaine aldehyde + NAD(+) + H2O = glycine betaine + NADH + 2 H(+). It functions in the pathway amine and polyamine biosynthesis; betaine biosynthesis via choline pathway; betaine from betaine aldehyde: step 1/1. Functionally, involved in the biosynthesis of the osmoprotectant glycine betaine. Catalyzes the irreversible oxidation of betaine aldehyde to the corresponding acid. The sequence is that of Betaine aldehyde dehydrogenase from Burkholderia ambifaria (strain MC40-6).